Consider the following 633-residue polypeptide: Chitin synthase regulatory factor 4 (633 aa).

Residues 121-151 (ATSSQETKRDRPLPNIRNSAPSATRSHSTPC) form a disordered region. Positions 136–149 (IRNSAPSATRSHST) are enriched in polar residues. A Phosphoserine modification is found at S148. 5 Sel1-like repeats span residues 278 to 314 (AKAMYFDAYVYETGAFDVESDIQRAWDLYSSSANLGY), 315 to 346 (TRSLYRLGVLLEDQGNLEEAVEYFEKGVSEND), 438 to 474 (SSAQLRMGAVYEFGKYGCPVVPRYSLFYYSAAAKRGE), 475 to 511 (TEADLAVAKWYLNGSDGIPVDEDLAFMHAERASMAGN), and 512 to 543 (ANAQFLMGYLFDTRGNTEQATYWYNEAAKAGH). Residues 583–613 (ASETSPPHAPAVSSTPVTSAPPVSQTKVTKV) form a disordered region. The span at 592–613 (PAVSSTPVTSAPPVSQTKVTKV) shows a compositional bias: low complexity.

It localises to the cytoplasm. Involved in septum formation. Required for the proper localization of chs2 at the septum. The sequence is that of Chitin synthase regulatory factor 4 (chr4) from Schizosaccharomyces pombe (strain 972 / ATCC 24843) (Fission yeast).